The chain runs to 680 residues: DNA-directed RNA polymerase subunit beta' (680 aa).

4 residues coordinate Zn(2+): C69, C71, C87, and C90. Mg(2+)-binding residues include D489, D491, and D493.

It belongs to the RNA polymerase beta' chain family. RpoC1 subfamily. In terms of assembly, in plastids the minimal PEP RNA polymerase catalytic core is composed of four subunits: alpha, beta, beta', and beta''. When a (nuclear-encoded) sigma factor is associated with the core the holoenzyme is formed, which can initiate transcription. The cofactor is Mg(2+). Zn(2+) is required as a cofactor.

The protein resides in the plastid. It localises to the chloroplast. It carries out the reaction RNA(n) + a ribonucleoside 5'-triphosphate = RNA(n+1) + diphosphate. In terms of biological role, DNA-dependent RNA polymerase catalyzes the transcription of DNA into RNA using the four ribonucleoside triphosphates as substrates. This Lobularia maritima (Sweet alyssum) protein is DNA-directed RNA polymerase subunit beta'.